A 451-amino-acid polypeptide reads, in one-letter code: Tubulin alpha-3 chain (451 aa).

A GTP-binding site is contributed by Gln11. N6-acetyllysine is present on Lys40. GTP-binding residues include Glu71, Gly144, Thr145, Thr179, Asn206, and Asn228. Glu71 serves as a coordination point for Mg(2+). The active site involves Glu254.

It belongs to the tubulin family. In terms of assembly, dimer of alpha and beta chains. A typical microtubule is a hollow water-filled tube with an outer diameter of 25 nm and an inner diameter of 15 nM. Alpha-beta heterodimers associate head-to-tail to form protofilaments running lengthwise along the microtubule wall with the beta-tubulin subunit facing the microtubule plus end conferring a structural polarity. Microtubules usually have 13 protofilaments but different protofilament numbers can be found in some organisms and specialized cells. It depends on Mg(2+) as a cofactor. In terms of processing, undergoes a tyrosination/detyrosination cycle, the cyclic removal and re-addition of a C-terminal tyrosine residue by the enzymes tubulin tyrosine carboxypeptidase (TTCP) and tubulin tyrosine ligase (TTL), respectively. Acetylation of alpha chains at Lys-40 stabilizes microtubules and affects affinity and processivity of microtubule motors. This modification has a role in multiple cellular functions, ranging from cell motility, cell cycle progression or cell differentiation to intracellular trafficking and signaling.

The protein resides in the cytoplasm. It localises to the cytoskeleton. It carries out the reaction GTP + H2O = GDP + phosphate + H(+). Tubulin is the major constituent of microtubules, a cylinder consisting of laterally associated linear protofilaments composed of alpha- and beta-tubulin heterodimers. Microtubules grow by the addition of GTP-tubulin dimers to the microtubule end, where a stabilizing cap forms. Below the cap, tubulin dimers are in GDP-bound state, owing to GTPase activity of alpha-tubulin. The chain is Tubulin alpha-3 chain (TUBA3) from Hordeum vulgare (Barley).